The chain runs to 211 residues: Thiamine-phosphate synthase (211 aa).

Residues 37–41 and asparagine 69 contribute to the 4-amino-2-methyl-5-(diphosphooxymethyl)pyrimidine site; that span reads QLRIK. Mg(2+) is bound by residues aspartate 70 and aspartate 89. Position 108 (serine 108) interacts with 4-amino-2-methyl-5-(diphosphooxymethyl)pyrimidine. 134-136 contacts 2-[(2R,5Z)-2-carboxy-4-methylthiazol-5(2H)-ylidene]ethyl phosphate; the sequence is TQT. Lysine 137 contributes to the 4-amino-2-methyl-5-(diphosphooxymethyl)pyrimidine binding site. 2-[(2R,5Z)-2-carboxy-4-methylthiazol-5(2H)-ylidene]ethyl phosphate contacts are provided by residues glycine 166 and 186 to 187; that span reads VS.

This sequence belongs to the thiamine-phosphate synthase family. It depends on Mg(2+) as a cofactor.

The catalysed reaction is 2-[(2R,5Z)-2-carboxy-4-methylthiazol-5(2H)-ylidene]ethyl phosphate + 4-amino-2-methyl-5-(diphosphooxymethyl)pyrimidine + 2 H(+) = thiamine phosphate + CO2 + diphosphate. The enzyme catalyses 2-(2-carboxy-4-methylthiazol-5-yl)ethyl phosphate + 4-amino-2-methyl-5-(diphosphooxymethyl)pyrimidine + 2 H(+) = thiamine phosphate + CO2 + diphosphate. It catalyses the reaction 4-methyl-5-(2-phosphooxyethyl)-thiazole + 4-amino-2-methyl-5-(diphosphooxymethyl)pyrimidine + H(+) = thiamine phosphate + diphosphate. The protein operates within cofactor biosynthesis; thiamine diphosphate biosynthesis; thiamine phosphate from 4-amino-2-methyl-5-diphosphomethylpyrimidine and 4-methyl-5-(2-phosphoethyl)-thiazole: step 1/1. In terms of biological role, condenses 4-methyl-5-(beta-hydroxyethyl)thiazole monophosphate (THZ-P) and 2-methyl-4-amino-5-hydroxymethyl pyrimidine pyrophosphate (HMP-PP) to form thiamine monophosphate (TMP). In Escherichia coli O9:H4 (strain HS), this protein is Thiamine-phosphate synthase.